A 507-amino-acid chain; its full sequence is 3-[(3aS,4S,7aS)-7a-methyl-1,5-dioxo-octahydro-1H-inden-4-yl]propanoyl:CoA ligase (507 aa).

ATP is bound by residues 177–185 (TSGTTGRSK), D391, R406, and K497.

Belongs to the ATP-dependent AMP-binding enzyme family.

The catalysed reaction is 3-[(3aS,4S,7aS)-7a-methyl-1,5-dioxo-octahydro-1H-inden-4-yl]propanoate + ATP + CoA = 3-[(3aS,4S,7aS)-7a-methyl-1,5-dioxo-octahydro-1H-inden-4-yl]propanoyl-CoA + AMP + diphosphate. It carries out the reaction 5-hydroxy-3-[(3aS,4S,5R,7aS)-7a-methyl-1,5-dioxo-octahydro-1H-inden-4-yl]propanoate + ATP + CoA = 3-[(3aS,4S,5R,7aS)-5-hydroxy-7a-methyl-1-oxo-octahydro-1H-inden-4-yl]propanoyl-CoA + AMP + diphosphate. In terms of biological role, involved in the catabolism of the rings C and D of cholesterol. Catalyzes the ATP-dependent CoA thioesterification of 3aalpha-H-4alpha(3'-propanoate)-7abeta-methylhexahydro-1,5-indanedione (HIP) to yield HIP-CoA. It can also use the hydroxylated analogs of HIP, 5alpha-OH HIP and 1beta-OH HIP. It requires that the side chain at C17 is completely removed. This is 3-[(3aS,4S,7aS)-7a-methyl-1,5-dioxo-octahydro-1H-inden-4-yl]propanoyl:CoA ligase from Mycobacterium tuberculosis (strain ATCC 25618 / H37Rv).